The chain runs to 185 residues: Elongation factor P (185 aa).

Belongs to the elongation factor P family.

It localises to the cytoplasm. Its pathway is protein biosynthesis; polypeptide chain elongation. In terms of biological role, involved in peptide bond synthesis. Stimulates efficient translation and peptide-bond synthesis on native or reconstituted 70S ribosomes in vitro. Probably functions indirectly by altering the affinity of the ribosome for aminoacyl-tRNA, thus increasing their reactivity as acceptors for peptidyl transferase. This is Elongation factor P from Clostridium botulinum (strain ATCC 19397 / Type A).